Here is a 105-residue protein sequence, read N- to C-terminus: Probable tetrachloroethene reductive dehalogenase membrane anchor protein (105 aa).

The next 3 membrane-spanning stretches (helical) occupy residues 3 to 23 (IYDV…QYGI), 35 to 55 (IPLQ…LAWG), and 66 to 86 (AIGM…IITY).

The protein belongs to the PceB family.

The protein localises to the cell membrane. May act as a membrane anchor for the tetrachloroethene reductive dehalogenase PceA. In Desulfitobacterium hafniense (Desulfitobacterium frappieri), this protein is Probable tetrachloroethene reductive dehalogenase membrane anchor protein.